A 275-amino-acid chain; its full sequence is NH(3)-dependent NAD(+) synthetase (275 aa).

Residue 46-53 (GISGGQDS) coordinates ATP. Residue D52 coordinates Mg(2+). A deamido-NAD(+)-binding site is contributed by R140. T160 provides a ligand contact to ATP. Position 165 (E165) interacts with Mg(2+). Deamido-NAD(+) is bound by residues K173 and D180. ATP is bound by residues K189 and T211. Deamido-NAD(+) is bound at residue 260–261 (HK).

Belongs to the NAD synthetase family. As to quaternary structure, homodimer.

It carries out the reaction deamido-NAD(+) + NH4(+) + ATP = AMP + diphosphate + NAD(+) + H(+). The protein operates within cofactor biosynthesis; NAD(+) biosynthesis; NAD(+) from deamido-NAD(+) (ammonia route): step 1/1. Its function is as follows. Catalyzes the ATP-dependent amidation of deamido-NAD to form NAD. Uses ammonia as a nitrogen source. This chain is NH(3)-dependent NAD(+) synthetase, found in Salmonella agona (strain SL483).